Reading from the N-terminus, the 616-residue chain is Dihydroxy-acid dehydratase (616 aa).

A Mg(2+)-binding site is contributed by Asp81. A [2Fe-2S] cluster-binding site is contributed by Cys122. Mg(2+) is bound by residues Asp123 and Lys124. Lys124 bears the N6-carboxylysine mark. A [2Fe-2S] cluster-binding site is contributed by Cys195. Residue Glu491 participates in Mg(2+) binding. Ser517 functions as the Proton acceptor in the catalytic mechanism.

It belongs to the IlvD/Edd family. As to quaternary structure, homodimer. The cofactor is [2Fe-2S] cluster. Mg(2+) serves as cofactor.

The enzyme catalyses (2R)-2,3-dihydroxy-3-methylbutanoate = 3-methyl-2-oxobutanoate + H2O. It carries out the reaction (2R,3R)-2,3-dihydroxy-3-methylpentanoate = (S)-3-methyl-2-oxopentanoate + H2O. The protein operates within amino-acid biosynthesis; L-isoleucine biosynthesis; L-isoleucine from 2-oxobutanoate: step 3/4. Its pathway is amino-acid biosynthesis; L-valine biosynthesis; L-valine from pyruvate: step 3/4. In terms of biological role, functions in the biosynthesis of branched-chain amino acids. Catalyzes the dehydration of (2R,3R)-2,3-dihydroxy-3-methylpentanoate (2,3-dihydroxy-3-methylvalerate) into 2-oxo-3-methylpentanoate (2-oxo-3-methylvalerate) and of (2R)-2,3-dihydroxy-3-methylbutanoate (2,3-dihydroxyisovalerate) into 2-oxo-3-methylbutanoate (2-oxoisovalerate), the penultimate precursor to L-isoleucine and L-valine, respectively. The sequence is that of Dihydroxy-acid dehydratase from Pectobacterium carotovorum subsp. carotovorum (strain PC1).